Reading from the N-terminus, the 187-residue chain is Putative manganese efflux pump MntP (187 aa).

The next 6 membrane-spanning stretches (helical) occupy residues 3-23 (WLTI…VALA), 39-59 (LGFH…LLGM), 65-85 (ISAY…GRMV), 103-123 (GMTM…VGLS), 124-144 (IAML…VAGV), and 166-186 (ICGG…HTLL).

This sequence belongs to the MntP (TC 9.B.29) family.

Its subcellular location is the cell inner membrane. Its function is as follows. Probably functions as a manganese efflux pump. This is Putative manganese efflux pump MntP from Geobacter sp. (strain M21).